A 452-amino-acid chain; its full sequence is Prenyltransferase fsdK (452 aa).

It belongs to the tryptophan dimethylallyltransferase family.

The protein operates within mycotoxin biosynthesis. Its function is as follows. Prenyltransferase; part of the gene cluster that mediates the biosynthesis of fusaridione A, a bright yellow trans-fused decalin-containing tetramic acid with antimicrobial activity. The PKS module of fsdS catalyzes the formation of the polyketide unit which is then conjugated to L-tyrosine by the condensation domain of the fsdS NRPS module. Activity of the Dieckmann cyclase domain (RED) results in release of the intermediate fusaridione A. The unstable pyrrolidinedione ring of fusaridione A is opened through a reverse-Dieckmann reaction to afford its ring-opened form. In Fusarium heterosporum, this protein is Prenyltransferase fsdK.